The chain runs to 175 residues: ALAGAIIAGASLTFQILDKVLAELGQVSRKIAIGIDNESGGSWTAMNAYFRSGTTDVILPEFVPNQKALLYSGRKNRGPDTTGAVGALAYYMSNGNTLGVMFSVPFDYNLYSNWWDVKVYSGKRRADQAMYEDLYYSNPYRGDNGWHQKNLGYGLKMKGIMTSAGEAIMEIRISR.

The tract at residues 1–10 (ALAGAIIAGA) is plays an important role in the hemolytic activity. An N-terminal region region spans residues 9–28 (GASLTFQILDKVLAELGQVS). Phosphocholine-binding residues include Ser52, Val85, Ser103, Pro105, Tyr131, Tyr135, and Tyr136. The tract at residues 103–118 (SVPFDYNLYSNWWDVK) is trp-rich region, which is important for the binding to lipid membrane.

Belongs to the actinoporin family. Sea anemone subfamily. In terms of assembly, octamer or nonamer in membranes. Monomer in the soluble state.

It is found in the secreted. The protein localises to the nematocyst. Its subcellular location is the target cell membrane. Pore-forming protein that forms cations-selective hydrophilic pores of around 1 nm and causes cardiac stimulation and cytolysis. Pore formation is a multi-step process that involves specific recognition of membrane sphingomyelin (but neither cholesterol nor phosphatidylcholine) using aromatic rich region and adjacent phosphocholine (POC) binding site, firm binding to the membrane (mainly driven by hydrophobic interactions) accompanied by the transfer of the N-terminal region to the lipid-water interface and finally pore formation after oligomerization of monomers. This Radianthus crispa (Leathery sea anemone) protein is DELTA-stichotoxin-Hcr4a.